The sequence spans 398 residues: Heat-inducible transcription repressor HrcA (398 aa).

This sequence belongs to the HrcA family.

Functionally, negative regulator of class I heat shock genes (grpE-dnaK-dnaJ and groELS operons). Prevents heat-shock induction of these operons. In Chlamydia pneumoniae (Chlamydophila pneumoniae), this protein is Heat-inducible transcription repressor HrcA.